The sequence spans 579 residues: Maintenance of mitochondrial morphology protein 1 (579 aa).

Over 1–43 the chain is Lumenal; that stretch reads MQQPQQQDLQIGLPYAPVQPPIPSPAAYFAYLPSPSRWTFTQG. A helical transmembrane segment spans residues 44 to 64; the sequence is LIVGQVSMVIVALLLIRYVIF. Residues 65 to 579 are Cytoplasmic-facing; sequence EDSATALEKE…GLRNRPGFVQ (515 aa). Positions 150-391 constitute an SMP-LTD domain; it reads LPESADWLNV…WPRYWSLTLP (242 aa). Disordered regions lie at residues 309–332, 460–479, and 558–579; these read VLPT…RSRH, RPSL…SGLR, and SSVL…GFVQ. Composition is skewed to low complexity over residues 311-328 and 465-476; these read PTAN…ATPP and SSRPPHVRSSSS.

Belongs to the MMM1 family. In terms of assembly, homodimer. Component of the ER-mitochondria encounter structure (ERMES) or MDM complex, composed of MMM1, MDM10, MDM12 and MDM34. An MMM1 homodimer associates with one molecule of MDM12 on each side in a pairwise head-to-tail manner, and the SMP-LTD domains of MMM1 and MDM12 generate a continuous hydrophobic tunnel for phospholipid trafficking.

The protein localises to the endoplasmic reticulum membrane. Functionally, component of the ERMES/MDM complex, which serves as a molecular tether to connect the endoplasmic reticulum (ER) and mitochondria. Components of this complex are involved in the control of mitochondrial shape and protein biogenesis, and function in nonvesicular lipid trafficking between the ER and mitochondria. The MDM12-MMM1 subcomplex functions in the major beta-barrel assembly pathway that is responsible for biogenesis of all outer membrane beta-barrel proteins, and acts in a late step after the SAM complex. The MDM10-MDM12-MMM1 subcomplex further acts in the TOM40-specific pathway after the action of the MDM12-MMM1 complex. Essential for establishing and maintaining the structure of mitochondria and maintenance of mtDNA nucleoids. The sequence is that of Maintenance of mitochondrial morphology protein 1 from Mycosarcoma maydis (Corn smut fungus).